Consider the following 233-residue polypeptide: UPF0502 protein Mpe_A1449 (233 aa).

It belongs to the UPF0502 family.

The chain is UPF0502 protein Mpe_A1449 from Methylibium petroleiphilum (strain ATCC BAA-1232 / LMG 22953 / PM1).